The primary structure comprises 370 residues: tRNA-specific 2-thiouridylase MnmA (370 aa).

ATP contacts are provided by residues 9–16 (GMSGGVDS) and Met35. Residues 95 to 97 (NPD) form an interaction with target base in tRNA region. Cys100 functions as the Nucleophile in the catalytic mechanism. Cys100 and Cys196 are disulfide-bonded. Gly124 serves as a coordination point for ATP. Positions 146-148 (KDQ) are interaction with tRNA. Cys196 acts as the Cysteine persulfide intermediate in catalysis. Residues 308–309 (RY) form an interaction with tRNA region.

The protein belongs to the MnmA/TRMU family.

The protein localises to the cytoplasm. The catalysed reaction is S-sulfanyl-L-cysteinyl-[protein] + uridine(34) in tRNA + AH2 + ATP = 2-thiouridine(34) in tRNA + L-cysteinyl-[protein] + A + AMP + diphosphate + H(+). Catalyzes the 2-thiolation of uridine at the wobble position (U34) of tRNA, leading to the formation of s(2)U34. In Ralstonia nicotianae (strain ATCC BAA-1114 / GMI1000) (Ralstonia solanacearum), this protein is tRNA-specific 2-thiouridylase MnmA.